Here is an 858-residue protein sequence, read N- to C-terminus: MVNFTVDQIRAIMDKKANIRNMSVIAHVDHGKSTLTDSLVCKAGIIASARAGETRFTDTRKDEQERCITIKSTAISLFYELSENDLAFIKQSKDGSGFLINLIDSPGHVDFSSEVTAALRVTDGALVVVDCVSGVCVQTETVLRQAIAERIKPVLMMNKMDRALLELQLDPEELYQTFQRIVENVNVIISTYGEGESGPMGNIMIDPVLGTVGFGSGLHGWAFTLKQFAEMYVAKFAAKGDAQMNPTERAKKVEDMMKKLWGDRYFDPATGKFSKSATGPDGKKLPRTFCQLILDPIFKVFDAIMTFKKEEAAKLIEKLDIKLDSEDKDKEGKPLLKAVMRRWLPAGDALLQMITIHLPSPVTAQKYRCELLYEGPPDDEAAIGIKNCDPRGSLMMYISKMVPTSDKGRFYAFGRVFSGLVSTGLKVRIMGPNYTPGKKEDLYLKPIQRTILMMGRYVEPIEDVPCGNIVGLVGVDQFLVKTGTITTFEHAHNMRVMKFSVSPVVRVAVEAKNPADLPKLVEGLKRLAKSDPMVQCIIEESGEHIIAGAGELHLEICLKDLEEDHACIPIKKSDPVVSYRETVSEESNVMCLSKSPNKHNRLYMKARPFPDGLAEDIDKGEVSARQELKQRARYLAEKYEWDVTEARKIWCFGPDGTGPNILTDITKGVQYLNEIKDSVVAGFQWATKEGVLCEENMRGVRFDVHDVTLHADAIHRGGGQIIPTARRCLYACVLTAQPRLMEPIYLVEIQCPEQVVGGIYGVLNRKRGHVFEESQVAGTPMFVVKAYLPVNESFGFTADLRSNTGGQAFPQCVFDHWQILPGDPFDSASRPSQVVAETRKRKGLKEGIPALDNFLDKL.

The tr-type G domain occupies 17 to 362 (ANIRNMSVIA…MITIHLPSPV (346 aa)). 26 to 33 (AHVDHGKS) contributes to the GTP binding site. Phosphothreonine is present on residues T57 and T59. GTP-binding positions include 158 to 161 (NKMD) and 216 to 218 (SGL). H715 carries the diphthamide modification.

Belongs to the TRAFAC class translation factor GTPase superfamily. Classic translation factor GTPase family. EF-G/EF-2 subfamily. Binds to 80S ribosomes. Actively translating ribosomes show mutually exclusive binding of eIF5a (EIF5A or EIF5A2) and EEF2/eEF2. Interacts with SERBP1; interaction sequesters EEF2/eEF2 at the A-site of the ribosome, thereby blocking the interaction sites of the mRNA-tRNA complex, promoting ribosome stabilization and hibernation. Interacts with HABP4; interaction takes place at the A-site of hibernating ribosomes and promotes ribosome stabilization. Post-translationally, phosphorylation by EF-2 kinase completely inactivates EF-2. Diphthamide is 2-[3-carboxyamido-3-(trimethyl-ammonio)propyl]histidine.

The protein localises to the cytoplasm. The protein resides in the nucleus. The enzyme catalyses GTP + H2O = GDP + phosphate + H(+). Its function is as follows. Catalyzes the GTP-dependent ribosomal translocation step during translation elongation. During this step, the ribosome changes from the pre-translocational (PRE) to the post-translocational (POST) state as the newly formed A-site-bound peptidyl-tRNA and P-site-bound deacylated tRNA move to the P and E sites, respectively. Catalyzes the coordinated movement of the two tRNA molecules, the mRNA and conformational changes in the ribosome. The polypeptide is Elongation factor 2 (EEF2) (Gallus gallus (Chicken)).